The chain runs to 93 residues: Photosystem I iron-sulfur center (93 aa).

4Fe-4S ferredoxin-type domains lie at 13-43 (KDHEIRIYSTCIGCTQCVRACPTDVLEMVPS) and 50-80 (QVVTVPRIEDCVGCKRCESACPTDFLSIRVY). Residues cysteine 23, cysteine 26, cysteine 29, cysteine 33, cysteine 60, cysteine 63, cysteine 66, and cysteine 70 each coordinate [4Fe-4S] cluster.

The eukaryotic PSI reaction center is composed of at least 11 subunits. [4Fe-4S] cluster is required as a cofactor.

It is found in the plastid. The protein localises to the chloroplast thylakoid membrane. The catalysed reaction is reduced [plastocyanin] + hnu + oxidized [2Fe-2S]-[ferredoxin] = oxidized [plastocyanin] + reduced [2Fe-2S]-[ferredoxin]. In terms of biological role, apoprotein for the two 4Fe-4S centers FA and FB of photosystem I (PSI); essential for photochemical activity. FB is the terminal electron acceptor of PSI, donating electrons to ferredoxin. The C-terminus interacts with PsaA/B/D and helps assemble the protein into the PSI complex. Required for binding of PsaD and PsaE to PSI. PSI is a plastocyanin-ferredoxin oxidoreductase, converting photonic excitation into a charge separation, which transfers an electron from the donor P700 chlorophyll pair to the spectroscopically characterized acceptors A0, A1, FX, FA and FB in turn. The sequence is that of Photosystem I iron-sulfur center from Bigelowiella natans (Pedinomonas minutissima).